A 160-amino-acid polypeptide reads, in one-letter code: MKNTVNDKILLTQQKLEEIEKELEHLINVERVNVIQEIKDARSQGDLSENAEYDVAREKQGIIESRIRELETIISKAKIIKADLGSSRVSIGSKVSLENVESGEIQTFQIVSSIDADPFKSKISNFSPIAQALLGQHQGDEVEVDVNEKYSVRILEVINE.

Positions 2–84 (KNTVNDKILL…SKAKIIKADL (83 aa)) form a coiled coil.

The protein belongs to the GreA/GreB family.

Necessary for efficient RNA polymerase transcription elongation past template-encoded arresting sites. The arresting sites in DNA have the property of trapping a certain fraction of elongating RNA polymerases that pass through, resulting in locked ternary complexes. Cleavage of the nascent transcript by cleavage factors such as GreA or GreB allows the resumption of elongation from the new 3'terminus. GreA releases sequences of 2 to 3 nucleotides. The sequence is that of Transcription elongation factor GreA from Mesomycoplasma hyopneumoniae (strain 232) (Mycoplasma hyopneumoniae).